The primary structure comprises 205 residues: Thymidylate kinase (205 aa).

13 to 20 (GIDGSGKS) is an ATP binding site.

It belongs to the thymidylate kinase family.

The catalysed reaction is dTMP + ATP = dTDP + ADP. In terms of biological role, phosphorylation of dTMP to form dTDP in both de novo and salvage pathways of dTTP synthesis. The sequence is that of Thymidylate kinase from Leptospira borgpetersenii serovar Hardjo-bovis (strain L550).